A 95-amino-acid polypeptide reads, in one-letter code: Large ribosomal subunit protein uL23 (95 aa).

This sequence belongs to the universal ribosomal protein uL23 family. In terms of assembly, part of the 50S ribosomal subunit. Contacts protein L29, and trigger factor when it is bound to the ribosome.

Functionally, one of the early assembly proteins it binds 23S rRNA. One of the proteins that surrounds the polypeptide exit tunnel on the outside of the ribosome. Forms the main docking site for trigger factor binding to the ribosome. In Anoxybacillus flavithermus (strain DSM 21510 / WK1), this protein is Large ribosomal subunit protein uL23.